The chain runs to 813 residues: Fibroblast growth factor receptor 2 (813 aa).

The first 14 residues, 1–14 (MLLLALLAFLLVSR), serve as a signal peptide directing secretion. Over 18–367 (RPSYSMVDDT…EDNPVPYYME (350 aa)) the chain is Extracellular. The region spanning 21-117 (YSMVDDTTPE…NSHFFHVNVT (97 aa)) is the Ig-like C2-type 1 domain. Cys58 and Cys103 are joined by a disulfide. 2 N-linked (GlcNAc...) asparagine glycosylation sites follow: Asn79 and Asn115. A disordered region spans residues 119–143 (ASSSGDDEDDNDGSEDFTNDNNNIR). A compositionally biased stretch (acidic residues) spans 123-136 (GDDEDDNDGSEDFT). Ig-like C2-type domains lie at 145 to 237 (PYWT…YHLD) and 246 to 348 (PILQ…AWLT). Residues 152-169 (KMEKKLHAVSAANTVKLR) are heparin-binding. The cysteines at positions 170 and 221 are disulfide-linked. Asn231, Asn255, Asn287, Asn308, and Asn321 each carry an N-linked (GlcNAc...) asparagine glycan. The cysteines at positions 268 and 332 are disulfide-linked. A helical transmembrane segment spans residues 368–388 (IGIYSTGIFIIFCMVVVCVVC). Residues 389-813 (RMRQGAKKKK…FQHVNGVVKT (425 aa)) lie on the Cytoplasmic side of the membrane. Tyr456 carries the phosphotyrosine; by autocatalysis modification. Residues 471–760 (LTLGKPLGEG…LTLTTNEEYL (290 aa)) form the Protein kinase domain. ATP contacts are provided by residues 477-485 (LGEGCFGQV), Lys507, 555-557 (EYA), and Asn561. Tyr576 bears the Phosphotyrosine; by autocatalysis mark. Asp616 (proton acceptor) is an active-site residue. 3 positions are modified to phosphotyrosine; by autocatalysis: Tyr646, Tyr647, and Tyr759. Low complexity predominate over residues 771–792 (PSFPDSSCSASSSSGDDSVFSP). A disordered region spans residues 771–801 (PSFPDSSCSASSSSGDDSVFSPDPMPHDPCL).

The protein belongs to the protein kinase superfamily. Tyr protein kinase family. Fibroblast growth factor receptor subfamily. In terms of assembly, monomer. Homodimer after ligand binding. Autophosphorylated. Binding of FGF family members together with heparan sulfate proteoglycan or heparin promotes receptor dimerization and autophosphorylation on tyrosine residues. Autophosphorylation occurs in trans between the two FGFR molecules present in the dimer. Post-translationally, N-glycosylated in the endoplasmic reticulum. The N-glycan chains undergo further maturation to an Endo H-resistant form in the Golgi apparatus. In terms of processing, ubiquitinated. FGFR2 is rapidly ubiquitinated after autophosphorylation, leading to internalization and degradation. Subject to degradation both in lysosomes and by the proteasome. In terms of tissue distribution, expressed in the anterior neural plate in early neurula stage embryos. Later in development, the protein is also expressed in the eye anlagen, midbrain-hindbrain boundary and otic vesicle.

The protein localises to the cell membrane. The protein resides in the golgi apparatus. It localises to the cytoplasmic vesicle. It catalyses the reaction L-tyrosyl-[protein] + ATP = O-phospho-L-tyrosyl-[protein] + ADP + H(+). With respect to regulation, present in an inactive conformation in the absence of bound ligand. Ligand binding leads to dimerization and activation by autophosphorylation on tyrosine residues. In terms of biological role, tyrosine-protein kinase that acts as a cell-surface receptor for fibroblast growth factors and plays an essential role in the regulation of cell proliferation, differentiation, migration and apoptosis, and in the regulation of embryonic development. Required for normal embryonic patterning, limb bud development, lung morphogenesis, osteogenesis and skin development. Plays an essential role in the regulation of osteoblast differentiation, proliferation and apoptosis, and is required for normal skeleton development. Promotes cell proliferation in keratinocytes and immature osteoblasts, but promotes apoptosis in differentiated osteoblasts. Phosphorylates PLCG1, FRS2 and PAK4. Ligand binding leads to the activation of several signaling cascades. Activation of PLCG1 leads to the production of the cellular signaling molecules diacylglycerol and inositol 1,4,5-trisphosphate. Phosphorylation of FRS2 triggers recruitment of GRB2, GAB1, PIK3R1 and SOS1, and mediates activation of RAS, MAPK1/ERK2, MAPK3/ERK1 and the MAP kinase signaling pathway, as well as of the AKT1 signaling pathway. FGFR2 signaling is down-regulated by ubiquitination, internalization and degradation. Mutations that lead to constitutive kinase activation or impair normal FGFR2 maturation, internalization and degradation lead to aberrant signaling. Over-expressed FGFR2 promotes activation of STAT1. This Xenopus laevis (African clawed frog) protein is Fibroblast growth factor receptor 2 (fgfr2).